The chain runs to 248 residues: MKRIVLIRHGESLWNKENRFTGWTDVDLSEKGIEEAKKAGELMKKEGFQFTKAYTSYLKRAVKTLNGVLDVMDLDWIPVEKTWRLNEKHYGMLQGLNKAETAEKYGDEQVLIWRRSYDVPPTPMEKEDPRSPFMDPRYKGVCEKDLPLTEALCDTVNRILPYWNETIFPTLKEHDEVLVAAHGNSLRGIIKVLKNISDEDIISLNLPTAVPYVFEFDDNLRLVKDYFLGDPEEIKKLMEAVANQGKKK.

Substrate is bound by residues 8–15 (RHGESLWN), 21–22 (TG), Arg-60, 87–90 (EKHY), Lys-98, 114–115 (RR), and 183–184 (GN). His-9 functions as the Tele-phosphohistidine intermediate in the catalytic mechanism. Glu-87 (proton donor/acceptor) is an active-site residue.

It belongs to the phosphoglycerate mutase family. BPG-dependent PGAM subfamily.

The catalysed reaction is (2R)-2-phosphoglycerate = (2R)-3-phosphoglycerate. The protein operates within carbohydrate degradation; glycolysis; pyruvate from D-glyceraldehyde 3-phosphate: step 3/5. Its function is as follows. Catalyzes the interconversion of 2-phosphoglycerate and 3-phosphoglycerate. The chain is 2,3-bisphosphoglycerate-dependent phosphoglycerate mutase from Porphyromonas gingivalis (strain ATCC 33277 / DSM 20709 / CIP 103683 / JCM 12257 / NCTC 11834 / 2561).